The following is a 78-amino-acid chain: DNA-directed RNA polymerase subunit omega (78 aa).

This sequence belongs to the RNA polymerase subunit omega family. As to quaternary structure, in cyanobacteria the RNAP catalytic core is composed of 2 alpha, 1 beta, 1 beta', 1 gamma and 1 omega subunit. When a sigma factor is associated with the core the holoenzyme is formed, which can initiate transcription.

It carries out the reaction RNA(n) + a ribonucleoside 5'-triphosphate = RNA(n+1) + diphosphate. Functionally, promotes RNA polymerase assembly. Latches the N- and C-terminal regions of the beta' subunit thereby facilitating its interaction with the beta and alpha subunits. This chain is DNA-directed RNA polymerase subunit omega, found in Nostoc punctiforme (strain ATCC 29133 / PCC 73102).